Consider the following 397-residue polypeptide: Subtilisin-like protease 12 (397 aa).

The signal sequence occupies residues 1-19 (MSIFKLMVIYFTLFWVVNA). Positions 20 to 116 (AQLLDLDSHG…VEPNREMKAA (97 aa)) are excised as a propeptide. The Inhibitor I9 domain occupies 35 to 115 (YIVVMKNGVS…FVEPNREMKA (81 aa)). Residues asparagine 123, asparagine 136, and asparagine 150 are each glycosylated (N-linked (GlcNAc...) asparagine). The Peptidase S8 domain maps to 125–397 (TWGLARISHM…DKLLYNGSGA (273 aa)). Active-site charge relay system residues include aspartate 157 and histidine 188. Residues asparagine 249, asparagine 305, and asparagine 334 are each glycosylated (N-linked (GlcNAc...) asparagine). Serine 343 acts as the Charge relay system in catalysis. N-linked (GlcNAc...) asparagine glycans are attached at residues asparagine 385 and asparagine 393.

Belongs to the peptidase S8 family.

Its subcellular location is the secreted. In terms of biological role, secreted subtilisin-like serine protease with keratinolytic activity that contributes to pathogenicity. In Arthroderma gypseum (strain ATCC MYA-4604 / CBS 118893) (Microsporum gypseum), this protein is Subtilisin-like protease 12 (SUB12).